Reading from the N-terminus, the 588-residue chain is Sulfite reductase [NADPH] hemoprotein beta-component (588 aa).

Positions 442, 448, 487, and 491 each coordinate [4Fe-4S] cluster. Cysteine 491 provides a ligand contact to siroheme.

It belongs to the nitrite and sulfite reductase 4Fe-4S domain family. In terms of assembly, alpha(8)-beta(8). The alpha component is a flavoprotein, the beta component is a hemoprotein. Requires siroheme as cofactor. The cofactor is [4Fe-4S] cluster.

The enzyme catalyses hydrogen sulfide + 3 NADP(+) + 3 H2O = sulfite + 3 NADPH + 4 H(+). The protein operates within sulfur metabolism; hydrogen sulfide biosynthesis; hydrogen sulfide from sulfite (NADPH route): step 1/1. Component of the sulfite reductase complex that catalyzes the 6-electron reduction of sulfite to sulfide. This is one of several activities required for the biosynthesis of L-cysteine from sulfate. This is Sulfite reductase [NADPH] hemoprotein beta-component from Actinobacillus pleuropneumoniae serotype 7 (strain AP76).